Here is a 259-residue protein sequence, read N- to C-terminus: Glutamate 5-kinase (259 aa).

Position 18 (Lys18) interacts with ATP. Residues Ser54, Asp141, and Asn153 each coordinate substrate. 173–174 contacts ATP; sequence SD.

This sequence belongs to the glutamate 5-kinase family.

The protein localises to the cytoplasm. The enzyme catalyses L-glutamate + ATP = L-glutamyl 5-phosphate + ADP. It participates in amino-acid biosynthesis; L-proline biosynthesis; L-glutamate 5-semialdehyde from L-glutamate: step 1/2. Its function is as follows. Catalyzes the transfer of a phosphate group to glutamate to form L-glutamate 5-phosphate. This chain is Glutamate 5-kinase, found in Clavibacter michiganensis subsp. michiganensis (strain NCPPB 382).